A 479-amino-acid polypeptide reads, in one-letter code: GTPase Obg (479 aa).

An Obg domain is found at 2–159 (PRFVDRVVIH…RDLTLELKTV (158 aa)). The OBG-type G domain occupies 160–340 (ADVGLVGFPS…LIFGLWQMVS (181 aa)). Residues 166-173 (GFPSAGKS), 191-195 (FTTLV), 212-215 (DVPG), 292-295 (NKID), and 321-323 (STV) each bind GTP. 2 residues coordinate Mg(2+): Ser173 and Thr193. An OCT domain is found at 358–436 (PVPVDDSGFD…IGEMTFDWEP (79 aa)). The segment at 438–479 (TPAGGHVAMSGRGTDVRLERSDRVGAAERKAARRQRRERDDD) is disordered. Positions 451-467 (TDVRLERSDRVGAAERK) are enriched in basic and acidic residues.

This sequence belongs to the TRAFAC class OBG-HflX-like GTPase superfamily. OBG GTPase family. As to quaternary structure, monomer. The cofactor is Mg(2+).

The protein localises to the cytoplasm. Functionally, an essential GTPase which binds GTP, GDP and possibly (p)ppGpp with moderate affinity, with high nucleotide exchange rates and a fairly low GTP hydrolysis rate. Plays a role in control of the cell cycle, stress response, ribosome biogenesis and in those bacteria that undergo differentiation, in morphogenesis control. The protein is GTPase Obg of Mycobacterium marinum (strain ATCC BAA-535 / M).